The primary structure comprises 179 residues: Ubiquitin-conjugating enzyme E2 C (179 aa).

Residues 1-31 (MASQNRDPVAASVAAARKGAEPSGGAARGPV) are disordered. A2 carries the N-acetylalanine modification. Position 3 is a phosphoserine (S3). The UBC core domain maps to 30 to 175 (PVGKRLQQEL…LQETYSKQVS (146 aa)). C114 acts as the Glycyl thioester intermediate in catalysis.

This sequence belongs to the ubiquitin-conjugating enzyme family. As to quaternary structure, component of the APC/C complex, composed of at least 14 distinct subunits that assemble into a complex of at least 19 chains with a combined molecular mass of around 1.2 MDa. Within this complex, directly interacts with ANAPC2. In terms of processing, autoubiquitinated by the APC/C complex, leading to its degradation by the proteasome. Its degradation plays a central role in APC/C regulation, allowing cyclin-A accumulation before S phase entry. APC/C substrates inhibit the autoubiquitination of UBE2C/UBCH10 but not its E2 function, hence APC/C remaining active until its substrates have been destroyed.

The enzyme catalyses S-ubiquitinyl-[E1 ubiquitin-activating enzyme]-L-cysteine + [E2 ubiquitin-conjugating enzyme]-L-cysteine = [E1 ubiquitin-activating enzyme]-L-cysteine + S-ubiquitinyl-[E2 ubiquitin-conjugating enzyme]-L-cysteine.. It catalyses the reaction S-ubiquitinyl-[E1 ubiquitin-activating enzyme]-L-cysteine + [acceptor protein]-L-lysine = [E1 ubiquitin-activating enzyme]-L-cysteine + N(6)-monoubiquitinyl-[acceptor protein]-L-lysine.. It participates in protein modification; protein ubiquitination. Its function is as follows. Accepts ubiquitin from the E1 complex and catalyzes its covalent attachment to other proteins. In vitro catalyzes 'Lys-11'- and 'Lys-48'-linked polyubiquitination. Acts as an essential factor of the anaphase promoting complex/cyclosome (APC/C), a cell cycle-regulated ubiquitin ligase that controls progression through mitosis. Acts by initiating 'Lys-11'-linked polyubiquitin chains on APC/C substrates, leading to the degradation of APC/C substrates by the proteasome and promoting mitotic exit. The polypeptide is Ubiquitin-conjugating enzyme E2 C (UBE2C) (Bos taurus (Bovine)).